The following is a 191-amino-acid chain: Elongation factor P (191 aa).

Position 34 is an N6-(3,6-diaminohexanoyl)-5-hydroxylysine (Lys-34).

This sequence belongs to the elongation factor P family. Post-translationally, may be beta-lysylated on the epsilon-amino group of Lys-34 by the combined action of EpmA and EpmB, and then hydroxylated on the C5 position of the same residue by EpmC (if this protein is present). Lysylation is critical for the stimulatory effect of EF-P on peptide-bond formation. The lysylation moiety may extend toward the peptidyltransferase center and stabilize the terminal 3-CCA end of the tRNA. Hydroxylation of the C5 position on Lys-34 may allow additional potential stabilizing hydrogen-bond interactions with the P-tRNA.

It localises to the cytoplasm. It functions in the pathway protein biosynthesis; polypeptide chain elongation. Involved in peptide bond synthesis. Alleviates ribosome stalling that occurs when 3 or more consecutive Pro residues or the sequence PPG is present in a protein, possibly by augmenting the peptidyl transferase activity of the ribosome. Modification of Lys-34 is required for alleviation. The chain is Elongation factor P from Colwellia psychrerythraea (strain 34H / ATCC BAA-681) (Vibrio psychroerythus).